The following is a 323-amino-acid chain: MILFKVMHLEFEKELLEIKEKIDRLLGLYRLGKEEVLSELDELRKKFKEKARKIYRDLSPWERVQVARHPKRPHTSDYIKYLIKDFEEVHGDTCYGDDKAVIAGFGYFRGKPVAVVGHEKGKDTKEKLERNFGMPHPEGYRKAIKVFKLAERYNIPVITFIDTPGAFPGIGAEERGQSRAIAESMLTMAFLKVPSVAVVIGEGGSGGALAFGVANRVCILENAYYSVISPEGCAAILWKDQSKVKEAAKALRLTAKDLKELGVVDCVIPEPYGAAHWSPRGTAMMVGMTLKKCLDELSKLTEEGVVRSRLEKFKNMGAFKIAS.

A CoA carboxyltransferase C-terminal domain is found at E35–E296.

Belongs to the AccA family. Acetyl-CoA carboxylase is a heterohexamer composed of biotin carboxyl carrier protein (AccB), biotin carboxylase (AccC) and two subunits each of ACCase subunit alpha (AccA) and ACCase subunit beta (AccD).

It localises to the cytoplasm. It carries out the reaction N(6)-carboxybiotinyl-L-lysyl-[protein] + acetyl-CoA = N(6)-biotinyl-L-lysyl-[protein] + malonyl-CoA. The protein operates within lipid metabolism; malonyl-CoA biosynthesis; malonyl-CoA from acetyl-CoA: step 1/1. Component of the acetyl coenzyme A carboxylase (ACC) complex. First, biotin carboxylase catalyzes the carboxylation of biotin on its carrier protein (BCCP) and then the CO(2) group is transferred by the carboxyltransferase to acetyl-CoA to form malonyl-CoA. The chain is Acetyl-coenzyme A carboxylase carboxyl transferase subunit alpha from Aquifex aeolicus (strain VF5).